The sequence spans 182 residues: Protein Syd (182 aa).

This sequence belongs to the Syd family.

The protein resides in the cell inner membrane. Functionally, interacts with the SecY protein in vivo. May bind preferentially to an uncomplexed state of SecY, thus functioning either as a chelating agent for excess SecY in the cell or as a regulatory factor that negatively controls the translocase function. This chain is Protein Syd, found in Pectobacterium carotovorum subsp. carotovorum (strain PC1).